We begin with the raw amino-acid sequence, 404 residues long: MKLPIYLDYAATCPVDERVAKKMMEYLTVEGNFGNPASRSHKFGWQAEEAVDVARNYIADLIGADSREIVFTSGATESDNLAIKGAAHFYQSKGKHIITCKTEHKAVLDTCRQLEREGFEVTYLNPKSDGLIDLEELKNAMRDDTILVSIMHVNNEIGVIQDIAAIGELCRARKILFHVDATQSVGKLPINLAELKVDLMSMSSHKLYGPKGIGALYVSRKPRVRLEAIIHGGGHERGMRSGTLPVHQIVGMGEAYRICKEEMASEMPRLKALRDRLYNGLKDIEETYVNGSMEHRLDSNLNISFNYVEGESLMMALRDIAVSSGSACTSASLEPSYVLRALGLNDELAHSSIRFTLGRYTTEEEIDYTIELVKNAVAKLRELSPLWDMFKEGIDLNTIEWTHH.

Pyridoxal 5'-phosphate is bound by residues 75 to 76, N155, Q183, and 203 to 205; these read AT and SSH. Position 206 is an N6-(pyridoxal phosphate)lysine (K206). T243 is a pyridoxal 5'-phosphate binding site. The active-site Cysteine persulfide intermediate is C328. C328 lines the [2Fe-2S] cluster pocket.

This sequence belongs to the class-V pyridoxal-phosphate-dependent aminotransferase family. NifS/IscS subfamily. In terms of assembly, homodimer. Forms a heterotetramer with IscU, interacts with other sulfur acceptors. Pyridoxal 5'-phosphate is required as a cofactor.

Its subcellular location is the cytoplasm. It catalyses the reaction (sulfur carrier)-H + L-cysteine = (sulfur carrier)-SH + L-alanine. It functions in the pathway cofactor biosynthesis; iron-sulfur cluster biosynthesis. In terms of biological role, master enzyme that delivers sulfur to a number of partners involved in Fe-S cluster assembly, tRNA modification or cofactor biosynthesis. Catalyzes the removal of elemental sulfur atoms from cysteine to produce alanine. Functions as a sulfur delivery protein for Fe-S cluster synthesis onto IscU, an Fe-S scaffold assembly protein, as well as other S acceptor proteins. The sequence is that of Cysteine desulfurase IscS from Pasteurella multocida (strain Pm70).